The chain runs to 257 residues: Imidazole glycerol phosphate synthase subunit HisF (257 aa).

Residues D11 and D130 contribute to the active site.

Belongs to the HisA/HisF family. As to quaternary structure, heterodimer of HisH and HisF.

The protein localises to the cytoplasm. It catalyses the reaction 5-[(5-phospho-1-deoxy-D-ribulos-1-ylimino)methylamino]-1-(5-phospho-beta-D-ribosyl)imidazole-4-carboxamide + L-glutamine = D-erythro-1-(imidazol-4-yl)glycerol 3-phosphate + 5-amino-1-(5-phospho-beta-D-ribosyl)imidazole-4-carboxamide + L-glutamate + H(+). Its pathway is amino-acid biosynthesis; L-histidine biosynthesis; L-histidine from 5-phospho-alpha-D-ribose 1-diphosphate: step 5/9. In terms of biological role, IGPS catalyzes the conversion of PRFAR and glutamine to IGP, AICAR and glutamate. The HisF subunit catalyzes the cyclization activity that produces IGP and AICAR from PRFAR using the ammonia provided by the HisH subunit. The protein is Imidazole glycerol phosphate synthase subunit HisF of Bradyrhizobium diazoefficiens (strain JCM 10833 / BCRC 13528 / IAM 13628 / NBRC 14792 / USDA 110).